A 493-amino-acid chain; its full sequence is Proline--tRNA ligase (493 aa).

This sequence belongs to the class-II aminoacyl-tRNA synthetase family. ProS type 3 subfamily. In terms of assembly, homodimer.

Its subcellular location is the cytoplasm. The enzyme catalyses tRNA(Pro) + L-proline + ATP = L-prolyl-tRNA(Pro) + AMP + diphosphate. Functionally, catalyzes the attachment of proline to tRNA(Pro) in a two-step reaction: proline is first activated by ATP to form Pro-AMP and then transferred to the acceptor end of tRNA(Pro). The sequence is that of Proline--tRNA ligase from Azobacteroides pseudotrichonymphae genomovar. CFP2.